The sequence spans 195 residues: Acireductone dioxygenase 2 (195 aa).

Fe(2+) is bound by residues His94, His96, Glu100, and His139. The Ni(2+) site is built by His94, His96, Glu100, and His139.

Belongs to the acireductone dioxygenase (ARD) family. It depends on Fe(2+) as a cofactor. The cofactor is Ni(2+).

Its subcellular location is the cytoplasm. The protein localises to the nucleus. It catalyses the reaction 1,2-dihydroxy-5-(methylsulfanyl)pent-1-en-3-one + O2 = 4-methylsulfanyl-2-oxobutanoate + formate + 2 H(+). It carries out the reaction 1,2-dihydroxy-5-(methylsulfanyl)pent-1-en-3-one + O2 = 3-(methylsulfanyl)propanoate + CO + formate + 2 H(+). It participates in amino-acid biosynthesis; L-methionine biosynthesis via salvage pathway; L-methionine from S-methyl-5-thio-alpha-D-ribose 1-phosphate: step 5/6. Functionally, catalyzes 2 different reactions between oxygen and the acireductone 1,2-dihydroxy-3-keto-5-methylthiopentene (DHK-MTPene) depending upon the metal bound in the active site. Fe-containing acireductone dioxygenase (Fe-ARD) produces formate and 2-keto-4-methylthiobutyrate (KMTB), the alpha-ketoacid precursor of methionine in the methionine recycle pathway. Ni-containing acireductone dioxygenase (Ni-ARD) produces methylthiopropionate, carbon monoxide and formate, and does not lie on the methionine recycle pathway. The protein is Acireductone dioxygenase 2 of Physcomitrium patens (Spreading-leaved earth moss).